Consider the following 317-residue polypeptide: MNDLIKDLGSEVRANVLAEALPWLQHFRDKIVVVKYGGNAMVDDDLKAAFAADMVFLRTVGAKPVVVHGGGPQISEMLNRVGLQGEFKGGFRVTTPEVMDIVRMVLFGQVGRDLVGLINSHGPYAVGTSGEDAGLFTAQKRMVNIDGVPTDIGLVGDIINVDASSLMDIIEAGRIPVVSTIAPGEDGQIYNINADTAAGALAAAIGAERLLVLTNVEGLYTDWPDKSSLVSKIKATELEAILPGLDSGMIPKMESCLNAVRGGVSAAHVIDGRIAHSVLLELLTMGGIGTMVLPDVFDRENYPEGTVFRKDDKDGEL.

Residues 70–71 (GG), R92, and N191 each bind substrate.

This sequence belongs to the acetylglutamate kinase family. ArgB subfamily.

It is found in the cytoplasm. The enzyme catalyses N-acetyl-L-glutamate + ATP = N-acetyl-L-glutamyl 5-phosphate + ADP. Its pathway is amino-acid biosynthesis; L-arginine biosynthesis; N(2)-acetyl-L-ornithine from L-glutamate: step 2/4. Its function is as follows. Catalyzes the ATP-dependent phosphorylation of N-acetyl-L-glutamate. In Corynebacterium glutamicum (strain R), this protein is Acetylglutamate kinase.